Reading from the N-terminus, the 341-residue chain is Retinol dehydrogenase 10 (341 aa).

Residues 3 to 23 (IVLEFFLVTFKVLWAFVLAAA) traverse the membrane as a helical; Signal-anchor segment. 40–64 (LITGAGSGLGRLFALEFARRRAQLV) is an NADP(+) binding site. Ser197 serves as a coordination point for substrate. Tyr210 functions as the Proton acceptor in the catalytic mechanism.

It belongs to the short-chain dehydrogenases/reductases (SDR) family.

Its subcellular location is the microsome membrane. It is found in the endoplasmic reticulum membrane. The enzyme catalyses all-trans-retinol + NADP(+) = all-trans-retinal + NADPH + H(+). The protein operates within cofactor metabolism; retinol metabolism. Functionally, retinol dehydrogenase with a clear preference for NADP. Converts all-trans-retinol to all-trans-retinal. Has no detectable activity towards 11-cis-retinol, 9-cis-retinol and 13-cis-retinol. In Xenopus tropicalis (Western clawed frog), this protein is Retinol dehydrogenase 10 (rdh10).